Reading from the N-terminus, the 226-residue chain is LIM domain-containing protein PLIM2a (226 aa).

LIM zinc-binding domains are found at residues Asp-8–Glu-68 and Asp-104–Glu-164. Residues Gln-173 to Ser-226 are disordered. Over residues Ser-191–Asp-209 the composition is skewed to basic and acidic residues. Positions Ala-210–Ser-226 are enriched in acidic residues.

As to quaternary structure, interacts with F-actin. As to expression, predominantly expressed in flowers, in the tapetum and in pollen grains. Detected in leaves and stems.

Its subcellular location is the cytoplasm. It is found in the cytoskeleton. Binds to actin filaments and promotes cross-linking into thick bundles. Has an actin-stabilizing activity. The actin regulatory activities are inhibited by pH &gt; 6.8 but are [Ca(2+)] independent. In Arabidopsis thaliana (Mouse-ear cress), this protein is LIM domain-containing protein PLIM2a.